The following is a 55-amino-acid chain: Large ribosomal subunit protein uL30 (55 aa).

This sequence belongs to the universal ribosomal protein uL30 family. In terms of assembly, part of the 50S ribosomal subunit.

In terms of biological role, binds the 5S and 23S rRNAs. This is Large ribosomal subunit protein uL30 from Deinococcus radiodurans (strain ATCC 13939 / DSM 20539 / JCM 16871 / CCUG 27074 / LMG 4051 / NBRC 15346 / NCIMB 9279 / VKM B-1422 / R1).